Here is a 357-residue protein sequence, read N- to C-terminus: Peptide chain release factor 1 (357 aa).

The residue at position 234 (glutamine 234) is an N5-methylglutamine.

The protein belongs to the prokaryotic/mitochondrial release factor family. In terms of processing, methylated by PrmC. Methylation increases the termination efficiency of RF1.

The protein localises to the cytoplasm. Its function is as follows. Peptide chain release factor 1 directs the termination of translation in response to the peptide chain termination codons UAG and UAA. The sequence is that of Peptide chain release factor 1 from Nocardioides sp. (strain ATCC BAA-499 / JS614).